A 360-amino-acid polypeptide reads, in one-letter code: Phosphoserine aminotransferase (360 aa).

R42 is a binding site for L-glutamate. Pyridoxal 5'-phosphate-binding positions include 76–77 (AR), W102, T153, D172, and Q195. The residue at position 196 (K196) is an N6-(pyridoxal phosphate)lysine. 237–238 (NT) is a pyridoxal 5'-phosphate binding site.

It belongs to the class-V pyridoxal-phosphate-dependent aminotransferase family. SerC subfamily. In terms of assembly, homodimer. Pyridoxal 5'-phosphate is required as a cofactor.

Its subcellular location is the cytoplasm. It carries out the reaction O-phospho-L-serine + 2-oxoglutarate = 3-phosphooxypyruvate + L-glutamate. The catalysed reaction is 4-(phosphooxy)-L-threonine + 2-oxoglutarate = (R)-3-hydroxy-2-oxo-4-phosphooxybutanoate + L-glutamate. The protein operates within amino-acid biosynthesis; L-serine biosynthesis; L-serine from 3-phospho-D-glycerate: step 2/3. It participates in cofactor biosynthesis; pyridoxine 5'-phosphate biosynthesis; pyridoxine 5'-phosphate from D-erythrose 4-phosphate: step 3/5. Its function is as follows. Catalyzes the reversible conversion of 3-phosphohydroxypyruvate to phosphoserine and of 3-hydroxy-2-oxo-4-phosphonooxybutanoate to phosphohydroxythreonine. In Aliivibrio fischeri (strain ATCC 700601 / ES114) (Vibrio fischeri), this protein is Phosphoserine aminotransferase.